Here is a 72-residue protein sequence, read N- to C-terminus: UPF0270 protein YheU (72 aa).

The protein belongs to the UPF0270 family.

The polypeptide is UPF0270 protein YheU (Salmonella arizonae (strain ATCC BAA-731 / CDC346-86 / RSK2980)).